Here is a 296-residue protein sequence, read N- to C-terminus: Probable lipid kinase YegS-like (296 aa).

A DAGKc domain is found at 1–130 (MPHTLLILNG…IDLAQVNGEH (130 aa)). Residues T37, 63–69 (GDGTINE), and T92 each bind ATP. Mg(2+) contacts are provided by L212, D215, and L217. E268 (proton acceptor) is an active-site residue.

The protein belongs to the diacylglycerol/lipid kinase family. YegS lipid kinase subfamily. Mg(2+) is required as a cofactor. The cofactor is Ca(2+).

It is found in the cytoplasm. Functionally, probably phosphorylates lipids; the in vivo substrate is unknown. This is Probable lipid kinase YegS-like from Yersinia pseudotuberculosis serotype I (strain IP32953).